The chain runs to 376 residues: Cobalt-precorrin-5B C(1)-methyltransferase (376 aa).

This sequence belongs to the CbiD family.

The enzyme catalyses Co-precorrin-5B + S-adenosyl-L-methionine = Co-precorrin-6A + S-adenosyl-L-homocysteine. It functions in the pathway cofactor biosynthesis; adenosylcobalamin biosynthesis; cob(II)yrinate a,c-diamide from sirohydrochlorin (anaerobic route): step 6/10. Functionally, catalyzes the methylation of C-1 in cobalt-precorrin-5B to form cobalt-precorrin-6A. The polypeptide is Cobalt-precorrin-5B C(1)-methyltransferase (Bradyrhizobium sp. (strain BTAi1 / ATCC BAA-1182)).